The primary structure comprises 443 residues: MLPFASCLPGSLLLWAFLLLLLGAASPQDPEEPDSYTECTDGYEWDADSQHCRDVNECLTIPEACKGEMKCINHYGGYLCLPRSAAVISDLHGEGPPPPAAHAQQPNPCPQGYEPDEQESCVDVDECTQALHDCRPSQDCHNLPGSYQCTCPDGYRKIGPECVDIDECRYRYCQHRCVNLPGSFRCQCEPGFQLGPNNRSCVDVNECDMGAPCEQRCFNSYGTFLCRCNQGYELHRDGFSCSDIDECGYSSYLCQYRCVNEPGRFSCHCPQGYQLLATRLCQDIDECETGAHQCSEAQTCVNFHGGYRCVDTNRCVEPYVQVSDNRCLCPASNPLCREQPSSIVHRYMSITSERSVPADVFQIQATSVYPGAYNAFQIRSGNTQGDFYIRQINNVSAMLVLARPVTGPREYVLDLEMVTMNSLMSYRASSVLRLTVFVGAYTF.

The first 27 residues, 1-27 (MLPFASCLPGSLLLWAFLLLLLGAASP), serve as a signal peptide directing secretion. Q28 is subject to Pyrrolidone carboxylic acid. Residues 36–81 (YTECTDGYEWDADSQHCRDVNECLTIPEACKGEMKCINHYGGYLCL) enclose the EGF-like 1; atypical domain. Disulfide bonds link C58/C121, C65/C80, C71/C109, C127/C140, C134/C149, C151/C162, C168/C177, C173/C186, C188/C201, C207/C217, C213/C226, C228/C241, C247/C258, C254/C267, C269/C281, C287/C300, C294/C309, and C315/C327. The interval 91-117 (LHGEGPPPPAAHAQQPNPCPQGYEPDE) is disordered. The region spanning 123–163 (DVDECTQALHDCRPSQDCHNLPGSYQCTCPDGYRKIGPECV) is the EGF-like 2; calcium-binding domain. The EGF-like 3; calcium-binding domain occupies 164–202 (DIDECRYRYCQHRCVNLPGSFRCQCEPGFQLGPNNRSCV). An N-linked (GlcNAc...) asparagine glycan is attached at N198. One can recognise an EGF-like 4; calcium-binding domain in the interval 203–242 (DVNECDMGAPCEQRCFNSYGTFLCRCNQGYELHRDGFSCS). The region spanning 243 to 282 (DIDECGYSSYLCQYRCVNEPGRFSCHCPQGYQLLATRLCQ) is the EGF-like 5; calcium-binding domain. The 46-residue stretch at 283 to 328 (DIDECETGAHQCSEAQTCVNFHGGYRCVDTNRCVEPYVQVSDNRCL) folds into the EGF-like 6; calcium-binding domain. An N-linked (GlcNAc...) asparagine glycan is attached at N394.

This sequence belongs to the fibulin family. Homodimer; disulfide-linked. Multimer; allows heparin binding. Monomer. Binds preferentially to p53 mutants. Interacts with FBN1 (via N-terminal domain); this interaction inhibits EFEMP2 binding to LOX and ELN. Interacts with ELN with moderate affinity; this interaction regulates ELN self-assembly maturation stage. Interacts with PCOLCE. Interacts with collagen type IV trimer (COL4A1-COL4A1-COL4A2), NID2 and moderately with COL15A1-derived endostatin. Interacts with EMILIN1; this interaction promotes the incorporation of EFEMP2 into the extracellular matrix. Interacts with LTBP4; the LTBP4 long form (LTBP4L) has a stronger binding affinity than the LTBP4 short form and the LTBP4 long form promotes fibrillar deposition of EFEMP2. Interacts with LOX (via propeptide); this interaction is strong and facilitates formation of ternary complexes with ELN during elastic fiber assembly; this interaction limits interaction of EFEMP2 with FBLN5. Interacts with PITX2. Interacts with FBLN5 with moderate affinity. Interacts with LOXL1 (via propeptide), LTBP1 and TGFB1 stronger than with LOXL2 and LTBP3. Post-translationally, N-glycosylated; contains mostly complex-type glycans. Not O-glycosylated. In terms of processing, cleaved by ELANE; produces a 50-55 kDa fragment. Cleaved by MMP2 and MMP9; produces several fragments. As to expression, expressed in elastic fibers of the skin, near the dermal-epidermal junction, surrounding the hair follicles and throughout the dermis. Expressed in tendon around tenocytes. Prominently expressed in cartilage, bone, perichondrium and ligaments. Also detected in bone marrow stroma. Expressed in aorta, lung, and esophagus.

Its subcellular location is the secreted. The protein localises to the extracellular space. It is found in the extracellular matrix. The protein resides in the basement membrane. Its function is as follows. Plays a crucial role in elastic fiber formation in tissue, and in the formation of ultrastructural connections between elastic laminae and smooth muscle cells in the aorta, therefore participates in terminal differentiation and maturation of smooth muscle cell (SMC) and in the mechanical properties and wall integrity maintenance of the aorta. In addition, is involved in the control of collagen fibril assembly in tissue throught proteolytic activation of LOX leading to cross- linking of collagen and elastin. Also promotes ELN coacervation and participates in the deposition of ELN coacervates on to microfibrils but also regulates ELN cross- linking through LOX interaction. Moreover adheres to the cells through heparin binding in a calcium-dependent manner and regulates vascularlar smooth muscle cells proliferation through angiotensin signaling. The sequence is that of EGF-containing fibulin-like extracellular matrix protein 2 from Mus musculus (Mouse).